Consider the following 110-residue polypeptide: Phosphoribosyl-ATP pyrophosphatase (110 aa).

The protein belongs to the PRA-PH family.

Its subcellular location is the cytoplasm. The catalysed reaction is 1-(5-phospho-beta-D-ribosyl)-ATP + H2O = 1-(5-phospho-beta-D-ribosyl)-5'-AMP + diphosphate + H(+). The protein operates within amino-acid biosynthesis; L-histidine biosynthesis; L-histidine from 5-phospho-alpha-D-ribose 1-diphosphate: step 2/9. The protein is Phosphoribosyl-ATP pyrophosphatase of Pseudomonas syringae pv. syringae (strain B728a).